The primary structure comprises 353 residues: Guanine nucleotide-binding protein subunit alpha (353 aa).

The segment at methionine 1–arginine 25 is disordered. Glycine 2 carries N-myristoyl glycine lipidation. Cysteine 3 is lipidated: S-palmitoyl cysteine. Over residues threonine 7–arginine 25 the composition is skewed to basic and acidic residues. One can recognise a G-alpha domain in the interval asparagine 32 to isoleucine 353. The G1 motif stretch occupies residues lysine 35–threonine 48. Residues glutamate 43, serine 44, glycine 45, lysine 46, serine 47, threonine 48, aspartate 150, leucine 175, threonine 181, glycine 203, asparagine 269, lysine 270, aspartate 272, and alanine 325 each coordinate GTP. Serine 47 is a binding site for Mg(2+). The interval aspartate 173–threonine 181 is G2 motif. Mg(2+) is bound at residue threonine 181. The tract at residues tyrosine 196 to arginine 205 is G3 motif. Residues isoleucine 265–aspartate 272 are G4 motif. Residues threonine 323–threonine 328 form a G5 motif region.

It belongs to the G-alpha family. G(q) subfamily. G proteins are composed of 3 units; alpha, beta and gamma. The alpha chain contains the guanine nucleotide binding site. Mg(2+) is required as a cofactor.

Functionally, guanine nucleotide-binding proteins (G proteins) are involved as modulators or transducers in various transmembrane signaling systems. This chain is Guanine nucleotide-binding protein subunit alpha (fadA), found in Emericella nidulans (strain FGSC A4 / ATCC 38163 / CBS 112.46 / NRRL 194 / M139) (Aspergillus nidulans).